Here is a 662-residue protein sequence, read N- to C-terminus: Intracellular exo-alpha-(1-&gt;5)-L-arabinofuranosidase (662 aa).

Residues E27, N72, and N174 each contribute to the alpha-L-arabinofuranose site. The active-site Proton donor/acceptor is E175. Alpha-L-arabinofuranose-binding residues include Y246, E294, and Q352. The Nucleophile role is filled by E294. Disordered stretches follow at residues 454–483, 497–548, and 588–662; these read LADA…SLRD, SIRC…RTAR, and WTRW…ARRC. The segment covering 519-533 has biased composition (low complexity); that stretch reads TGTPPAAPPSSSSAP. Residues 537–547 show a composition bias toward basic and acidic residues; sequence PTARRSPDRTA. Low complexity-rich tracts occupy residues 590–603, 628–641, and 649–662; these read RWAP…PSRR, RRSP…TPAP, and AGAS…ARRC.

It belongs to the glycosyl hydrolase 51 family. In terms of assembly, homohexamer; trimer of dimers.

The protein localises to the cytoplasm. It carries out the reaction Hydrolysis of terminal non-reducing alpha-L-arabinofuranoside residues in alpha-L-arabinosides.. Its pathway is glycan metabolism; L-arabinan degradation. Functionally, involved in the degradation of arabinan and is a key enzyme in the complete degradation of the plant cell wall. Catalyzes the cleavage of terminal alpha-(1-&gt;5)-arabinofuranosyl bonds in different hemicellulosic homopolysaccharides (arabino-oligoxylosides, branched and debranched arabinans). It acts rapidly on the short-chain arabino-oligoxylosides from digestion of xylan with xylanases. It hydrolyzes slowly arabinan and arabinoxylan from wheat and rye flour. This is Intracellular exo-alpha-(1-&gt;5)-L-arabinofuranosidase from Streptomyces lividans.